The primary structure comprises 67 residues: Sec-independent protein translocase protein TatA (67 aa).

A helical membrane pass occupies residues 1–21 (MMPGPFELIVILVIVLLLFGG).

The protein belongs to the TatA/E family. As to quaternary structure, the Tat system comprises two distinct complexes: a TatABC complex, containing multiple copies of TatA, TatB and TatC subunits, and a separate TatA complex, containing only TatA subunits. Substrates initially bind to the TatABC complex, which probably triggers association of the separate TatA complex to form the active translocon.

The protein resides in the cell inner membrane. In terms of biological role, part of the twin-arginine translocation (Tat) system that transports large folded proteins containing a characteristic twin-arginine motif in their signal peptide across membranes. TatA could form the protein-conducting channel of the Tat system. This chain is Sec-independent protein translocase protein TatA, found in Ruthia magnifica subsp. Calyptogena magnifica.